A 56-amino-acid chain; its full sequence is Large ribosomal subunit protein bL32c (56 aa).

Belongs to the bacterial ribosomal protein bL32 family.

It localises to the plastid. It is found in the chloroplast. The chain is Large ribosomal subunit protein bL32c from Platanus occidentalis (Sycamore).